We begin with the raw amino-acid sequence, 203 residues long: Large ribosomal subunit protein uL18 (203 aa).

This sequence belongs to the universal ribosomal protein uL18 family. Part of the 50S ribosomal subunit. Contacts the 5S and 23S rRNAs.

Functionally, this is one of the proteins that bind and probably mediate the attachment of the 5S RNA into the large ribosomal subunit, where it forms part of the central protuberance. The sequence is that of Large ribosomal subunit protein uL18 from Pyrococcus abyssi (strain GE5 / Orsay).